Consider the following 207-residue polypeptide: Sodium/potassium-transporting ATPase subunit beta-1-interacting protein 1 (207 aa).

3 consecutive transmembrane segments (helical) span residues 2 to 22 (GRCS…AAAL), 35 to 55 (APIL…LGTL), and 62 to 82 (LILY…IICF). Residue N100 is glycosylated (N-linked (GlcNAc...) asparagine). The helical transmembrane segment at 147–167 (ALSSALQIFLALFGFVYACYV) threads the bilayer.

It belongs to the NKAIN family. In terms of assembly, interacts with atp1b1 C-terminus.

It localises to the cell membrane. This Xenopus tropicalis (Western clawed frog) protein is Sodium/potassium-transporting ATPase subunit beta-1-interacting protein 1 (nkain1).